The following is a 257-amino-acid chain: Aspartate/glutamate leucyltransferase (257 aa).

Belongs to the R-transferase family. Bpt subfamily.

It is found in the cytoplasm. The catalysed reaction is N-terminal L-glutamyl-[protein] + L-leucyl-tRNA(Leu) = N-terminal L-leucyl-L-glutamyl-[protein] + tRNA(Leu) + H(+). It carries out the reaction N-terminal L-aspartyl-[protein] + L-leucyl-tRNA(Leu) = N-terminal L-leucyl-L-aspartyl-[protein] + tRNA(Leu) + H(+). Functions in the N-end rule pathway of protein degradation where it conjugates Leu from its aminoacyl-tRNA to the N-termini of proteins containing an N-terminal aspartate or glutamate. The chain is Aspartate/glutamate leucyltransferase from Sphingopyxis alaskensis (strain DSM 13593 / LMG 18877 / RB2256) (Sphingomonas alaskensis).